A 193-amino-acid polypeptide reads, in one-letter code: Endoribonuclease YbeY (193 aa).

3 residues coordinate Zn(2+): His-109, His-113, and His-119. The interval 143-193 is disordered; it reads GAALREGRREGRAGEAKDRWTRSPTSISTPSRSGSTARGSRAKTSRAGSRT. Residues 147–163 show a composition bias toward basic and acidic residues; sequence REGRREGRAGEAKDRWT. The span at 164-181 shows a compositional bias: low complexity; that stretch reads RSPTSISTPSRSGSTARG.

Belongs to the endoribonuclease YbeY family. Zn(2+) serves as cofactor.

The protein resides in the cytoplasm. Functionally, single strand-specific metallo-endoribonuclease involved in late-stage 70S ribosome quality control and in maturation of the 3' terminus of the 16S rRNA. This is Endoribonuclease YbeY from Anaeromyxobacter dehalogenans (strain 2CP-C).